The primary structure comprises 371 residues: N-acetyldiaminopimelate deacetylase (371 aa).

Aspartate 68 is an active-site residue. Catalysis depends on glutamate 127, which acts as the Proton acceptor.

This sequence belongs to the peptidase M20A family. N-acetyldiaminopimelate deacetylase subfamily.

The catalysed reaction is N-acetyl-(2S,6S)-2,6-diaminopimelate + H2O = (2S,6S)-2,6-diaminopimelate + acetate. It participates in amino-acid biosynthesis; L-lysine biosynthesis via DAP pathway; LL-2,6-diaminopimelate from (S)-tetrahydrodipicolinate (acetylase route): step 3/3. In terms of biological role, catalyzes the conversion of N-acetyl-diaminopimelate to diaminopimelate and acetate. In Listeria monocytogenes serovar 1/2a (strain ATCC BAA-679 / EGD-e), this protein is N-acetyldiaminopimelate deacetylase.